Reading from the N-terminus, the 381-residue chain is MPFGNTHNKWKLNYSAAEEFPDLSKHNNHMAKALTLDIYKKLRDKETPSGFTLDDIIQTGVDNPGHPFIMTVGCVAGDEECYEVFKDLFDPVIEDRHGGYKPTDKHKTDLNQENLKGGDDLDPNYVLSSRVRTGRSIKGIALPPHCSRGERRLVEKLCIDGLATLTGEFQGKYYPLSSMSDAEQQQLIDDHFLFDKPISPLLLASGMARDWPDGRGIWHNNDKTFLVWVNEEDHLRVISMQKGGNMKEVFRRFCVGLKKIEDIFVKAGRGFMWNEHLGYVLTCPSNLGTGLRGGVHVKIPHLCKHEKFSEVLKRTRLQKRGTGGVDTAAVGSIYDISNADRLGFSEVEQVQMVVDGVKLMVEMEKRLENGKSIDDLMPAQK.

In terms of domain architecture, Phosphagen kinase N-terminal spans 11-98; it reads KLNYSAAEEF…FDPVIEDRHG (88 aa). One can recognise a Phosphagen kinase C-terminal domain in the interval 125 to 367; it reads YVLSSRVRTG…KLMVEMEKRL (243 aa). ATP-binding positions include 128 to 132, histidine 191, arginine 236, arginine 292, 320 to 325, and aspartate 335; these read SSRVR and RGTGGV.

It belongs to the ATP:guanido phosphotransferase family. As to quaternary structure, dimer of identical or non-identical chains. With MM being the major form in skeletal muscle and myocardium, MB existing in myocardium, and BB existing in many tissues, especially brain.

Its subcellular location is the cytoplasm. The catalysed reaction is creatine + ATP = N-phosphocreatine + ADP + H(+). In terms of biological role, reversibly catalyzes the transfer of phosphate between ATP and various phosphogens (e.g. creatine phosphate). Creatine kinase isoenzymes play a central role in energy transduction in tissues with large, fluctuating energy demands, such as skeletal muscle, heart, brain and spermatozoa. The sequence is that of Creatine kinase M-type from Tetronarce californica (Pacific electric ray).